Consider the following 382-residue polypeptide: Sphingoid long-chain base transporter RSB1 (382 aa).

Residues 1 to 34 (MSNATNNTLGSLLPQLEAAANSNSLYGGMVPNLR) lie on the Extracellular side of the membrane. 2 N-linked (GlcNAc...) asparagine glycosylation sites follow: asparagine 3 and asparagine 6. A helical membrane pass occupies residues 35–55 (FNITMIVIWGILLTIHVVQLL). Over 56 to 57 (MR) the chain is Cytoplasmic. The helical transmembrane segment at 58 to 78 (QYWFSIAFICTGILEVLGFIG) threads the bilayer. Residues 79–90 (RTWSHSNVADMD) lie on the Extracellular side of the membrane. The helical transmembrane segment at 91–111 (AFLLNMICLTIAPVFTMGGIY) threads the bilayer. The Cytoplasmic portion of the chain corresponds to 112–135 (YQLAKLIEVYGHRFSLLPSPMAYS). A helical membrane pass occupies residues 136–156 (FIFICSDIVSLVVQAVGGGLC). Residues 157–171 (GVAVTDGTSTTTGNH) lie on the Extracellular side of the membrane. A helical transmembrane segment spans residues 172–192 (VFIAGLAIQVASMAIFLMLWF). Topologically, residues 193 to 241 (HFLFRIYISVRWEHINSRPISLSLLKISQTEVDYLYREKFHFLRLEPKR) are cytoplasmic. The helical transmembrane segment at 242–262 (WVFHYFNLAMTVAVLTIFTRC) threads the bilayer. Residues 263–281 (CYRLAELVVGWDGYLITHE) are Extracellular-facing. Residues 282 to 302 (WYFIILDALMMAIATVTLTIF) traverse the membrane as a helical segment. Topologically, residues 303 to 382 (HPGFAFKGRS…LFSSKKKAKL (80 aa)) are cytoplasmic.

The protein belongs to the lipid-translocating exporter (LTE) (TC 9.A.26.1) family.

The protein resides in the cell membrane. Its function is as follows. Catalyzes the ATP-dependent translocation of sphingoid long-chain bases (LCBs) from the cytoplasmic site toward the extracytoplasmic side of the membrane (flip-flop). Involved in the establishment of the functional lipid asymmetry of the plasma membrane. Regulates intracellular levels of LCBs, sphingolipid precursors that are growth inhibitory at increased levels. This is Sphingoid long-chain base transporter RSB1 (RSB1) from Saccharomyces cerevisiae (strain AWRI1631) (Baker's yeast).